A 252-amino-acid chain; its full sequence is Probable endonuclease 4 (252 aa).

Zn(2+) is bound by residues His-56, His-96, Glu-129, Asp-162, His-165, His-191, Asp-204, His-206, and Glu-233.

This sequence belongs to the AP endonuclease 2 family. It depends on Zn(2+) as a cofactor.

The enzyme catalyses Endonucleolytic cleavage to 5'-phosphooligonucleotide end-products.. Its function is as follows. Endonuclease IV plays a role in DNA repair. It cleaves phosphodiester bonds at apurinic or apyrimidinic (AP) sites, generating a 3'-hydroxyl group and a 5'-terminal sugar phosphate. This chain is Probable endonuclease 4, found in Mycobacterium leprae (strain Br4923).